The sequence spans 233 residues: Glycolipid transfer protein 3 (233 aa).

4 residues coordinate a ganglioside GM3 (d18:1(4E)): Asp-79, Asn-83, Trp-126, and His-165.

This sequence belongs to the GLTP family.

In terms of biological role, may be involved in glycolipids transfer. The protein is Glycolipid transfer protein 3 of Arabidopsis thaliana (Mouse-ear cress).